We begin with the raw amino-acid sequence, 308 residues long: Growth/differentiation factor 15 (308 aa).

A signal peptide spans 1-29 (MPGQELKTLNGSQMLLVLLVLLWPPHGGA). The propeptide occupies 30–192 (VSLAEASRAS…HLRPRASRGR (163 aa)). An N-linked (GlcNAc...) asparagine glycan is attached at N70. The segment at 152–179 (APALHLRLSPPPSQSDQLLVKSSSSRPQ) is disordered. A compositionally biased stretch (polar residues) spans 165-178 (QSDQLLVKSSSSRP). 4 cysteine pairs are disulfide-bonded: C203/C210, C211/C274, C240/C305, and C244/C307.

This sequence belongs to the TGF-beta family. Homodimer; disulfide-linked. Interacts with GFRAL and RET; ligand of GFRAL, which mediates GDF15 internalization and cellular signaling through interaction with RET via the formation of a 2:2:2 ternary complex composed of GDF15, GFRAL and RET. In terms of tissue distribution, detected in plasma (at protein level).

It is found in the secreted. In terms of biological role, hormone produced in response to various stresses to confer information about those stresses to the brain, and trigger an aversive response, characterized by nausea and/or loss of appetite. The aversive response is both required to reduce continuing exposure to those stresses at the time of exposure and to promote avoidance behavior in the future. Acts by binding to its receptor, GFRAL, activating GFRAL-expressing neurons localized in the area postrema and nucleus tractus solitarius of the brainstem. It then triggers the activation of neurons localized within the parabrachial nucleus and central amygdala, which constitutes part of the 'emergency circuit' that shapes responses to stressful conditions. The GDF15-GFRAL signal induces expression of genes involved in metabolism, such as lipid metabolism in adipose tissues. Required for avoidance behavior in response to food allergens: induced downstream of mast cell activation to promote aversion and minimize harmful effects of exposure to noxious substances. In addition to suppress appetite, also promotes weight loss by enhancing energy expenditure in muscle: acts by increasing calcium futile cycling in muscle. Contributes to the effect of metformin, an anti-diabetic drug, on appetite reduction and weight loss: produced in the kidney in response to metformin treatment, thereby activating the GDF15-GFRAL response, leading to reduced appetite and weight. Produced in response to anticancer drugs, such as camptothecin or cisplatin, promoting nausea and contributing to malnutrition. Overproduced in many cancers, promoting anorexia in cancer (cachexia). Responsible for the risk of nausea during pregnancy: high levels of GDF15 during pregnancy, mostly originating from embryos, are associated with increased nausea. Maternal sensitivity to nausea is probably determined by pre-pregnancy exposure to GDF15, females with naturally high level of GDF15 being less susceptible to nausea than females with low levels of GDF15 before pregnancy. Promotes metabolic adaptation in response to systemic inflammation caused by bacterial and viral infections in order to promote tissue tolerance and prevent tissue damage. Inhibits growth hormone signaling on hepatocytes. This is Growth/differentiation factor 15 from Macaca fascicularis (Crab-eating macaque).